The chain runs to 274 residues: MAIVKCKPTSPGRRHVVKVVNPELHKGKPYAPLLEKLSKSGGRNNNGRITTRHIGGGHKQHYRLVDFKRNKDGIPAVVERLEYDPNRSANIALVLYKDGERRYILAPKGLKAGDQIQSGVDAAIKAGNTLPMRNIPVGSTVHNVEMKPGKGGQLARSAGAYVQIVARDGSYVTLRLRSGEMRKVLADCRATLGEVGNAEHMLRVLGKAGASRWRGIRPTVRGTAMNPVDHPHGGGEGRNFGKHPVTPWGVQTKGKKTRSNKRTDKFIVRRRSKK.

The tract at residues Arg221 to Lys274 is disordered.

This sequence belongs to the universal ribosomal protein uL2 family. As to quaternary structure, part of the 50S ribosomal subunit. Forms a bridge to the 30S subunit in the 70S ribosome.

One of the primary rRNA binding proteins. Required for association of the 30S and 50S subunits to form the 70S ribosome, for tRNA binding and peptide bond formation. It has been suggested to have peptidyltransferase activity; this is somewhat controversial. Makes several contacts with the 16S rRNA in the 70S ribosome. The sequence is that of Large ribosomal subunit protein uL2 from Yersinia enterocolitica.